A 769-amino-acid polypeptide reads, in one-letter code: 4-hydroxybenzoyl-CoA reductase subunit alpha (769 aa).

Residues glutamine 214, 244-245, 522-526, 650-655, and 722-725 contribute to the Mo-molybdopterin cytosine dinucleotide site; these read GF, SSRVT, VGKALN, and KEAS.

It belongs to the xanthine dehydrogenase family. As to quaternary structure, heterohexamer of two alpha, two beta and two gamma subunits. The cofactor is Mo-molybdopterin cytosine dinucleotide. Post-translationally, the N-terminus is blocked.

It carries out the reaction oxidized 2[4Fe-4S]-[ferredoxin] + benzoyl-CoA + H2O = 4-hydroxybenzoyl-CoA + reduced 2[4Fe-4S]-[ferredoxin] + 2 H(+). Inactivated by low concentrations of cyanide in vitro. Functionally, component of a complex that catalyzes the reductive dehydroxylation of 4-hydroxybenzoyl-CoA to benzoyl-CoA. Reaction is not reversible. Is a key enzyme in the anaerobic degradation of phenolic compounds. The protein is 4-hydroxybenzoyl-CoA reductase subunit alpha (hcrA) of Thauera aromatica.